A 392-amino-acid chain; its full sequence is G2/mitotic-specific cyclin-B (392 aa).

This sequence belongs to the cyclin family. Cyclin AB subfamily.

In terms of biological role, essential for the control of the cell cycle at the G2/M (mitosis) transition. Interacts with the CDC2 protein kinase to form MPF. G2/M cyclins accumulate steadily during G2 and are abruptly destroyed at mitosis. The chain is G2/mitotic-specific cyclin-B from Hydra viridissima (Green hydra).